We begin with the raw amino-acid sequence, 334 residues long: 6-phosphogluconolactonase (334 aa).

It belongs to the cycloisomerase 2 family.

It carries out the reaction 6-phospho-D-glucono-1,5-lactone + H2O = 6-phospho-D-gluconate + H(+). It functions in the pathway carbohydrate degradation; pentose phosphate pathway; D-ribulose 5-phosphate from D-glucose 6-phosphate (oxidative stage): step 2/3. Its function is as follows. Catalyzes the hydrolysis of 6-phosphogluconolactone to 6-phosphogluconate. This Yersinia pseudotuberculosis serotype O:1b (strain IP 31758) protein is 6-phosphogluconolactonase.